Here is a 550-residue protein sequence, read N- to C-terminus: Mycosin-2 (550 aa).

The N-terminal stretch at 1–33 is a signal peptide; sequence MASPLNRPGLRAAAASAALTLVALSANVPAAQA. Residues 34 to 62 form a disordered region; it reads IPPPSVDPAMVPADARPGPDQPMRRSNSC. Residues 79 to 490 form the Peptidase S8 domain; it reads GFNLVNISKA…YGLVDPVAAL (412 aa). Catalysis depends on charge relay system residues Asp-103 and His-133. Positions 168–190 are enriched in pro residues; it reads PPVTAAPAPPVEVPPPMPPPPPV. Residues 168-236 form a disordered region; sequence PPVTAAPAPP…PPPPPGAPDG (69 aa). The active-site Charge relay system is Ser-435. Residues 524–544 form a helical membrane-spanning segment; the sequence is NIAIGFVGAVATGVLAMAIGA.

It belongs to the peptidase S8 family.

The protein resides in the cell membrane. The polypeptide is Mycosin-2 (Mycobacterium tuberculosis (strain ATCC 25618 / H37Rv)).